The primary structure comprises 153 residues: UPF0260 protein YcgN (153 aa).

It belongs to the UPF0260 family.

This is UPF0260 protein YcgN from Escherichia coli O6:K15:H31 (strain 536 / UPEC).